Here is a 276-residue protein sequence, read N- to C-terminus: Dermonecrotic toxin LlSicTox-alphaIV1ii (276 aa).

His5 is an active-site residue. Residues Glu25 and Asp27 each contribute to the Mg(2+) site. His41 functions as the Nucleophile in the catalytic mechanism. Disulfide bonds link Cys45-Cys51 and Cys47-Cys193. Position 85 (Asp85) interacts with Mg(2+).

This sequence belongs to the arthropod phospholipase D family. Class II subfamily. Mg(2+) serves as cofactor. Expressed by the venom gland.

It is found in the secreted. The catalysed reaction is an N-(acyl)-sphingosylphosphocholine = an N-(acyl)-sphingosyl-1,3-cyclic phosphate + choline. It catalyses the reaction an N-(acyl)-sphingosylphosphoethanolamine = an N-(acyl)-sphingosyl-1,3-cyclic phosphate + ethanolamine. It carries out the reaction a 1-acyl-sn-glycero-3-phosphocholine = a 1-acyl-sn-glycero-2,3-cyclic phosphate + choline. The enzyme catalyses a 1-acyl-sn-glycero-3-phosphoethanolamine = a 1-acyl-sn-glycero-2,3-cyclic phosphate + ethanolamine. Dermonecrotic toxins cleave the phosphodiester linkage between the phosphate and headgroup of certain phospholipids (sphingolipid and lysolipid substrates), forming an alcohol (often choline) and a cyclic phosphate. This toxin acts on sphingomyelin (SM). It may also act on ceramide phosphoethanolamine (CPE), lysophosphatidylcholine (LPC) and lysophosphatidylethanolamine (LPE), but not on lysophosphatidylserine (LPS), and lysophosphatidylglycerol (LPG). It acts by transphosphatidylation, releasing exclusively cyclic phosphate products as second products. Induces dermonecrosis, hemolysis, increased vascular permeability, edema, inflammatory response, and platelet aggregation. In Loxosceles laeta (South American recluse spider), this protein is Dermonecrotic toxin LlSicTox-alphaIV1ii.